A 174-amino-acid chain; its full sequence is Photosystem I assembly protein Ycf4 (174 aa).

Transmembrane regions (helical) follow at residues 11-31 (LSNIFWALTITLGGLGFFLNG) and 56-76 (IILMFYGTVALILGLFLCLTI).

Belongs to the Ycf4 family.

It localises to the plastid. The protein resides in the chloroplast thylakoid membrane. Functionally, seems to be required for the assembly of the photosystem I complex. The polypeptide is Photosystem I assembly protein Ycf4 (Emiliania huxleyi (Coccolithophore)).